Consider the following 184-residue polypeptide: Isopentenyl-diphosphate Delta-isomerase (184 aa).

Positions 26 and 33 each coordinate Mn(2+). The region spanning 31–165 (PLHLAFSCYL…PSAFSPWLGL (135 aa)) is the Nudix hydrolase domain. Residue Cys-68 is part of the active site. Mn(2+) is bound at residue His-70. Residue Glu-88 participates in Mg(2+) binding. Mn(2+) contacts are provided by Glu-115 and Glu-117. Glu-117 is a catalytic residue.

This sequence belongs to the IPP isomerase type 1 family. Mg(2+) is required as a cofactor. Mn(2+) serves as cofactor.

It localises to the cytoplasm. It catalyses the reaction isopentenyl diphosphate = dimethylallyl diphosphate. It functions in the pathway isoprenoid biosynthesis; dimethylallyl diphosphate biosynthesis; dimethylallyl diphosphate from isopentenyl diphosphate: step 1/1. In terms of biological role, catalyzes the 1,3-allylic rearrangement of the homoallylic substrate isopentenyl (IPP) to its highly electrophilic allylic isomer, dimethylallyl diphosphate (DMAPP). The polypeptide is Isopentenyl-diphosphate Delta-isomerase (Paenarthrobacter aurescens (strain TC1)).